We begin with the raw amino-acid sequence, 565 residues long: Dihydroxy-acid dehydratase (565 aa).

Residue Cys-53 participates in [2Fe-2S] cluster binding. A Mg(2+)-binding site is contributed by Asp-85. A [2Fe-2S] cluster-binding site is contributed by Cys-126. Mg(2+)-binding residues include Asp-127 and Lys-128. At Lys-128 the chain carries N6-carboxylysine. Cys-198 provides a ligand contact to [2Fe-2S] cluster. Mg(2+) is bound at residue Glu-450. Ser-476 functions as the Proton acceptor in the catalytic mechanism.

This sequence belongs to the IlvD/Edd family. As to quaternary structure, homodimer. [2Fe-2S] cluster is required as a cofactor. The cofactor is Mg(2+).

The enzyme catalyses (2R)-2,3-dihydroxy-3-methylbutanoate = 3-methyl-2-oxobutanoate + H2O. The catalysed reaction is (2R,3R)-2,3-dihydroxy-3-methylpentanoate = (S)-3-methyl-2-oxopentanoate + H2O. The protein operates within amino-acid biosynthesis; L-isoleucine biosynthesis; L-isoleucine from 2-oxobutanoate: step 3/4. Its pathway is amino-acid biosynthesis; L-valine biosynthesis; L-valine from pyruvate: step 3/4. Functions in the biosynthesis of branched-chain amino acids. Catalyzes the dehydration of (2R,3R)-2,3-dihydroxy-3-methylpentanoate (2,3-dihydroxy-3-methylvalerate) into 2-oxo-3-methylpentanoate (2-oxo-3-methylvalerate) and of (2R)-2,3-dihydroxy-3-methylbutanoate (2,3-dihydroxyisovalerate) into 2-oxo-3-methylbutanoate (2-oxoisovalerate), the penultimate precursor to L-isoleucine and L-valine, respectively. In Synechococcus sp. (strain JA-2-3B'a(2-13)) (Cyanobacteria bacterium Yellowstone B-Prime), this protein is Dihydroxy-acid dehydratase.